A 312-amino-acid chain; its full sequence is Aspartoacylase (312 aa).

Zn(2+)-binding residues include His20 and Glu23. N-acetyl-L-aspartate contacts are provided by Arg62, Asn69, and Arg70. His115 contacts Zn(2+). N-acetyl-L-aspartate contacts are provided by Tyr163 and Arg167. Glu177 (proton donor/acceptor) is an active-site residue. N-acetyl-L-aspartate is bound at residue Tyr287.

The protein belongs to the AspA/AstE family. Aspartoacylase subfamily. As to quaternary structure, homodimer. Zn(2+) is required as a cofactor.

The protein localises to the cytoplasm. Its subcellular location is the nucleus. It carries out the reaction an N-acyl-L-aspartate + H2O = a carboxylate + L-aspartate. It catalyses the reaction N-acetyl-L-aspartate + H2O = L-aspartate + acetate. In terms of biological role, catalyzes the deacetylation of N-acetylaspartic acid (NAA) to produce acetate and L-aspartate. NAA occurs in high concentration in brain and its hydrolysis NAA plays a significant part in the maintenance of intact white matter. In other tissues it acts as a scavenger of NAA from body fluids. This Mus musculus (Mouse) protein is Aspartoacylase.